The chain runs to 173 residues: Ribosome maturation factor RimM (173 aa).

Residues 90-169 (EDEYFWFDIL…RIDTKGAQDI (80 aa)) form the PRC barrel domain.

This sequence belongs to the RimM family. As to quaternary structure, binds ribosomal protein uS19.

The protein resides in the cytoplasm. An accessory protein needed during the final step in the assembly of 30S ribosomal subunit, possibly for assembly of the head region. Essential for efficient processing of 16S rRNA. May be needed both before and after RbfA during the maturation of 16S rRNA. It has affinity for free ribosomal 30S subunits but not for 70S ribosomes. This Nitratiruptor sp. (strain SB155-2) protein is Ribosome maturation factor RimM.